The primary structure comprises 153 residues: Calmodulin-like protein 4 (153 aa).

EF-hand domains follow at residues 8–43 (DQINEYKECFSLYDKQQRGKIKATDLLVSMRCLGAS), 44–79 (PTPGEVQRHLQTHGIDKNGELDFSTFLTIMHMQIKQ), 81–116 (DPKKEILLAMLMADKEKKGYIMASELRSKLMKLGEK), and 117–152 (LTHKEVDDLFKEAGIEPNGQVKYDTFIQRITIPVRD).

The protein belongs to the calmodulin family. Interacts with MYO7B; the interaction mediates the association of CALML4 with the IMAC/intermicrovillar adhesion complex. Interacts with MYO7A. Expressed in the small intestine, in both mature enterocytes on the villus surface and immature cells that reside in the crypt stem-cell niche.

Its subcellular location is the cell projection. It localises to the microvillus. Its function is as follows. As part of the intermicrovillar adhesion complex/IMAC plays a role in epithelial brush border differentiation, controlling microvilli organization and length. Acts as a light chain for MYO7B and is required for efficient targeting of the IMAC to the tips of border brush microvilli. This is Calmodulin-like protein 4 (Calml4) from Mus musculus (Mouse).